A 439-amino-acid chain; its full sequence is Cysteine--tRNA ligase (439 aa).

Residue Cys-28 coordinates Zn(2+). The 'HIGH' region motif lies at 30–40 (ITVYDLCHIGH). 3 residues coordinate Zn(2+): Cys-209, His-234, and Glu-238. The short motif at 266–270 (KMSKS) is the 'KMSKS' region element. Residue Lys-269 participates in ATP binding.

Belongs to the class-I aminoacyl-tRNA synthetase family. Monomer. Zn(2+) serves as cofactor.

It localises to the cytoplasm. It catalyses the reaction tRNA(Cys) + L-cysteine + ATP = L-cysteinyl-tRNA(Cys) + AMP + diphosphate. The protein is Cysteine--tRNA ligase of Shigella boydii serotype 4 (strain Sb227).